The sequence spans 207 residues: MIQGTLYIVSAPSGAGKSSLIQALLKTQPLYDTQVSVSHTTRAMRPGENQGEHYFFITEEAFRQMIDNNEFLEHARVFDNYYGTSRKVIEETLASGVDVFLDIDWQGAQQIRKKMPSARSIFILPPSKEELCRRLRGRGQDSEDIIEKRMDQAVAEMVHYNEYDYLIVNDDFNTALADLHTIIRSERLHRERQAQRHDALISKLLAD.

The Guanylate kinase-like domain maps to 4–184 (GTLYIVSAPS…ALADLHTIIR (181 aa)). An ATP-binding site is contributed by 11–18 (APSGAGKS).

Belongs to the guanylate kinase family.

The protein resides in the cytoplasm. It carries out the reaction GMP + ATP = GDP + ADP. Its function is as follows. Essential for recycling GMP and indirectly, cGMP. This chain is Guanylate kinase, found in Photorhabdus laumondii subsp. laumondii (strain DSM 15139 / CIP 105565 / TT01) (Photorhabdus luminescens subsp. laumondii).